The following is a 340-amino-acid chain: S-adenosylmethionine:tRNA ribosyltransferase-isomerase (340 aa).

This sequence belongs to the QueA family. Monomer.

The protein resides in the cytoplasm. The catalysed reaction is 7-aminomethyl-7-carbaguanosine(34) in tRNA + S-adenosyl-L-methionine = epoxyqueuosine(34) in tRNA + adenine + L-methionine + 2 H(+). It participates in tRNA modification; tRNA-queuosine biosynthesis. In terms of biological role, transfers and isomerizes the ribose moiety from AdoMet to the 7-aminomethyl group of 7-deazaguanine (preQ1-tRNA) to give epoxyqueuosine (oQ-tRNA). The chain is S-adenosylmethionine:tRNA ribosyltransferase-isomerase from Campylobacter concisus (strain 13826).